A 361-amino-acid polypeptide reads, in one-letter code: Ribosomal RNA small subunit methyltransferase H (361 aa).

Residues 54 to 56 (GGH), Asp74, Tyr101, Asp122, and Gln129 each bind S-adenosyl-L-methionine. The interval 318 to 361 (ARNSRASSAKLRAAQRLAEGQAPRPRRRNKYAPEGRDEPEGGAA) is disordered. The span at 348–361 (YAPEGRDEPEGGAA) shows a compositional bias: basic and acidic residues.

It belongs to the methyltransferase superfamily. RsmH family.

The protein resides in the cytoplasm. The enzyme catalyses cytidine(1402) in 16S rRNA + S-adenosyl-L-methionine = N(4)-methylcytidine(1402) in 16S rRNA + S-adenosyl-L-homocysteine + H(+). Specifically methylates the N4 position of cytidine in position 1402 (C1402) of 16S rRNA. This is Ribosomal RNA small subunit methyltransferase H from Nitratidesulfovibrio vulgaris (strain DSM 19637 / Miyazaki F) (Desulfovibrio vulgaris).